A 138-amino-acid chain; its full sequence is Basic phospholipase A2 homolog 7 (138 aa).

The signal sequence occupies residues 1 to 16 (MRTLWLMAVLLVGVEG). 6 disulfides stabilise this stretch: cysteine 42-cysteine 131, cysteine 44-cysteine 60, cysteine 59-cysteine 111, cysteine 65-cysteine 138, cysteine 66-cysteine 104, and cysteine 91-cysteine 102. The segment at 121–133 (KKKKINLKLFCKK) is important for membrane-damaging activities in eukaryotes and bacteria; heparin-binding.

Belongs to the phospholipase A2 family. Group II subfamily. K49 sub-subfamily. Expressed by the venom gland.

Its subcellular location is the secreted. Its function is as follows. Snake venom phospholipase A2 homolog that lacks enzymatic activity. Is myotoxic and displays edema-inducing activities. A model of myotoxic mechanism has been proposed: an apo Lys49-PLA2 is activated by the entrance of a hydrophobic molecule (e.g. fatty acid) at the hydrophobic channel of the protein leading to a reorientation of a monomer. This reorientation causes a transition between 'inactive' to 'active' states, causing alignment of C-terminal and membrane-docking sites (MDoS) side-by-side and putting the membrane-disruption sites (MDiS) in the same plane, exposed to solvent and in a symmetric position for both monomers. The MDoS region stabilizes the toxin on membrane by the interaction of charged residues with phospholipid head groups. Subsequently, the MDiS region destabilizes the membrane with penetration of hydrophobic residues. This insertion causes a disorganization of the membrane, allowing an uncontrolled influx of ions (i.e. calcium and sodium), and eventually triggering irreversible intracellular alterations and cell death. This is Basic phospholipase A2 homolog 7 from Craspedocephalus gramineus (Bamboo pit viper).